Reading from the N-terminus, the 587-residue chain is Aspartate--tRNA ligase (587 aa).

Glu174 is a binding site for L-aspartate. The tract at residues 198-201 is aspartate; it reads QITK. Arg220 is a binding site for L-aspartate. Residues 220-222 and Gln229 each bind ATP; that span reads RDE. His443 provides a ligand contact to L-aspartate. ATP is bound at residue Glu477. Arg484 contacts L-aspartate. 529-532 is a binding site for ATP; it reads GLDR.

It belongs to the class-II aminoacyl-tRNA synthetase family. Type 1 subfamily. Homodimer.

Its subcellular location is the cytoplasm. It carries out the reaction tRNA(Asp) + L-aspartate + ATP = L-aspartyl-tRNA(Asp) + AMP + diphosphate. Catalyzes the attachment of L-aspartate to tRNA(Asp) in a two-step reaction: L-aspartate is first activated by ATP to form Asp-AMP and then transferred to the acceptor end of tRNA(Asp). The sequence is that of Aspartate--tRNA ligase from Streptococcus pneumoniae (strain 70585).